The primary structure comprises 325 residues: uncharacterized protein (325 aa).

The tract at residues 1-32 (MKQEYIPLDEFPNKSNEGMLNDEGTSSSGLST) is disordered. The segment covering 23–32 (EGTSSSGLST) has biased composition (low complexity). Residues 135–223 (AEEISNLKTS…LKKREDLLRL (89 aa)) adopt a coiled-coil conformation.

It is found in the cytoplasm. It localises to the cytoskeleton. The protein resides in the microtubule organizing center. Its subcellular location is the spindle pole body. This is an uncharacterized protein from Schizosaccharomyces pombe (strain 972 / ATCC 24843) (Fission yeast).